The chain runs to 70 residues: DNA-directed RNA polymerase subunit omega (70 aa).

This sequence belongs to the RNA polymerase subunit omega family. The RNAP catalytic core consists of 2 alpha, 1 beta, 1 beta' and 1 omega subunit. When a sigma factor is associated with the core the holoenzyme is formed, which can initiate transcription.

It catalyses the reaction RNA(n) + a ribonucleoside 5'-triphosphate = RNA(n+1) + diphosphate. In terms of biological role, promotes RNA polymerase assembly. Latches the N- and C-terminal regions of the beta' subunit thereby facilitating its interaction with the beta and alpha subunits. This is DNA-directed RNA polymerase subunit omega from Thermoanaerobacter pseudethanolicus (strain ATCC 33223 / 39E) (Clostridium thermohydrosulfuricum).